The primary structure comprises 347 residues: NADH-quinone oxidoreductase subunit H 1 (347 aa).

Transmembrane regions (helical) follow at residues 13–33 (IIMIGQSLLLLVCLLVFIAYV), 50–70 (PNVVGPFGLFQSFADLLKFVF), 82–102 (AVFLLAPLVTVLLALSTWAVV), 115–135 (VGILYIFAISSLEVYGIIMGG), 161–181 (IGFVIVTVLLCVGSLNLTDIV), 198–218 (FLDWHWLSLFPMFIVFFISAL), 263–283 (CALTTILFLGGWLPPVDIWIL), 286–306 (VPGIIWFTLKACLVFFMFAMV), and 321–341 (LGWKVFLPLSLAMVIIVAFVL).

It belongs to the complex I subunit 1 family. NDH-1 is composed of 14 different subunits. Subunits NuoA, H, J, K, L, M, N constitute the membrane sector of the complex.

Its subcellular location is the cell inner membrane. The enzyme catalyses a quinone + NADH + 5 H(+)(in) = a quinol + NAD(+) + 4 H(+)(out). In terms of biological role, NDH-1 shuttles electrons from NADH, via FMN and iron-sulfur (Fe-S) centers, to quinones in the respiratory chain. The immediate electron acceptor for the enzyme in this species is believed to be ubiquinone. Couples the redox reaction to proton translocation (for every two electrons transferred, four hydrogen ions are translocated across the cytoplasmic membrane), and thus conserves the redox energy in a proton gradient. This subunit may bind ubiquinone. The sequence is that of NADH-quinone oxidoreductase subunit H 1 from Rhizobium etli (strain ATCC 51251 / DSM 11541 / JCM 21823 / NBRC 15573 / CFN 42).